We begin with the raw amino-acid sequence, 158 residues long: MPLLLTGKKFHNDLKTNKCLAIFAPLEGGYETRLLRRMRAKGFKTFITSARGLGDPEVFLLKLHGVRPPHLGHQSVGRNGALGEVQQVIPQASELFNENDKNKLLWLLEGQVLSQSELESLIEICTNDNKLTIVVEMGGSRKLEWKPLSNYILDEFES.

The protein belongs to the complex I NdhN subunit family. NDH-1 can be composed of about 15 different subunits; different subcomplexes with different compositions have been identified which probably have different functions.

The protein resides in the cellular thylakoid membrane. The catalysed reaction is a plastoquinone + NADH + (n+1) H(+)(in) = a plastoquinol + NAD(+) + n H(+)(out). It catalyses the reaction a plastoquinone + NADPH + (n+1) H(+)(in) = a plastoquinol + NADP(+) + n H(+)(out). Its function is as follows. NDH-1 shuttles electrons from an unknown electron donor, via FMN and iron-sulfur (Fe-S) centers, to quinones in the respiratory and/or the photosynthetic chain. The immediate electron acceptor for the enzyme in this species is believed to be plastoquinone. Couples the redox reaction to proton translocation, and thus conserves the redox energy in a proton gradient. Cyanobacterial NDH-1 also plays a role in inorganic carbon-concentration. This chain is NAD(P)H-quinone oxidoreductase subunit N, found in Prochlorococcus marinus (strain MIT 9215).